Here is a 424-residue protein sequence, read N- to C-terminus: Imidazolonepropionase (424 aa).

The Fe(3+) site is built by H84 and H86. H84 and H86 together coordinate Zn(2+). 4-imidazolone-5-propanoate-binding residues include R93, Y156, and H189. An N-formimidoyl-L-glutamate-binding site is contributed by Y156. H254 lines the Fe(3+) pocket. H254 serves as a coordination point for Zn(2+). Residue E257 participates in 4-imidazolone-5-propanoate binding. A Fe(3+)-binding site is contributed by D328. Residue D328 coordinates Zn(2+). The N-formimidoyl-L-glutamate site is built by N330 and G332. S333 provides a ligand contact to 4-imidazolone-5-propanoate.

The protein belongs to the metallo-dependent hydrolases superfamily. HutI family. The cofactor is Zn(2+). Requires Fe(3+) as cofactor.

It is found in the cytoplasm. The enzyme catalyses 4-imidazolone-5-propanoate + H2O = N-formimidoyl-L-glutamate. Its pathway is amino-acid degradation; L-histidine degradation into L-glutamate; N-formimidoyl-L-glutamate from L-histidine: step 3/3. Functionally, catalyzes the hydrolytic cleavage of the carbon-nitrogen bond in imidazolone-5-propanoate to yield N-formimidoyl-L-glutamate. It is the third step in the universal histidine degradation pathway. The protein is Imidazolonepropionase of Geobacillus thermodenitrificans (strain NG80-2).